We begin with the raw amino-acid sequence, 1158 residues long: Voltage-gated inwardly rectifying potassium channel KCNH2 (1158 aa).

Residues 1–402 (MPVRRGHVAP…RIHRWTILHY (402 aa)) lie on the Cytoplasmic side of the membrane. The 72-residue stretch at 17 to 88 (TIIRKFEGQS…AAQIAQALLG (72 aa)) folds into the PAS domain. The region spanning 92-144 (RKVEIAFYRKDGSCFLCLVDVVPVKNEDGAVIMFILNFEVVMEKDMVGSPTHD) is the PAC domain. The segment at 232 to 314 (RALVGSSSPP…GAMHPLRGGL (83 aa)) is disordered. S239 carries the post-translational modification Phosphoserine. Over residues 258–269 (PDASGSSCSLAR) the composition is skewed to polar residues. A phosphoserine mark is found at S283, S284, S319, and S350. A helical membrane pass occupies residues 403–423 (SPFKAVWDWLILLLVIYTAVF). At 424 to 449 (TPYSAAFLLKETEEGPPAPDCGYACQ) the chain is on the extracellular side. Residues 450-470 (PLAVVDFIVDIMFIVDILINF) form a helical membrane-spanning segment. Topologically, residues 471–494 (RTTYVNANEEVVSHPGRIAVHYFK) are cytoplasmic. The chain crosses the membrane as a helical span at residues 495–515 (GWFLIDMVAAIPFDLLIFGSG). The Extracellular portion of the chain corresponds to 516–519 (SEEL). A helical; Voltage-sensor membrane pass occupies residues 520-540 (IGLLKTARLLRLVRVARKLDR). Over 541-546 (YSEYGA) the chain is Cytoplasmic. Residues 547–567 (AVLFLLMCTFALIAHWLACIW) traverse the membrane as a helical segment. Residues 568-610 (YAIGNMEQPHMDSRIGWLHNLGDQIGKPYNSSGLGGPSIKDKY) lie on the Extracellular side of the membrane. An N-linked (GlcNAc...) asparagine glycan is attached at N597. The segment at residues 611–631 (VTALYFTFSSLTSVGFGNVSP) is an intramembrane region (pore-forming). Residues 623–628 (SVGFGN) carry the Selectivity filter motif. Residues 632–637 (NTNSEK) are Extracellular-facing. The helical transmembrane segment at 638–658 (IFSICVMLIGSLMYASIFGNV) threads the bilayer. Over 659 to 1158 (SAIIQRLYSG…LHRHGSDPGS (500 aa)) the chain is Cytoplasmic. The interval 741 to 841 (PFRGATKGCL…IHRDDLLEVL (101 aa)) is cNMP-binding domain. The tract at residues 869–987 (GSPGSAELEG…KSSDTCNPLS (119 aa)) is disordered. 2 positions are modified to phosphoserine: S870 and S873. The segment covering 882-891 (RQRKRKLSFR) has biased composition (basic residues). A compositionally biased stretch (gly residues) spans 910–926 (GRAGAGPSGRGRPGGPW). The span at 927–938 (GESPSSGPSSPE) shows a compositional bias: low complexity. Pro residues predominate over residues 959–969 (SPRPPGEPPGG). The residue at position 1013 (R1013) is an Omega-N-methylarginine. A coiled-coil region spans residues 1034-1061 (RGDVEGRLDALQRQLNRLETRLSADMAT). The disordered stretch occupies residues 1116–1158 (FEELPPGAPELPQDGPPRRLSLPGQLGALTSQPLHRHGSDPGS). S1136 carries the post-translational modification Phosphoserine.

The protein belongs to the potassium channel family. H (Eag) (TC 1.A.1.20) subfamily. Kv11.1/KCNH2 sub-subfamily. In terms of assembly, the potassium channel is probably composed of a homo- or heterotetrameric complex of pore-forming alpha subunits that can associate with modulating beta subunits. Interacts with DNAJB12 and DNAJB14; chaperones DNAJB12 and DNAJB14 promote tetramerization. Heteromultimer with KCNH6/ERG2 and KCNH7/ERG3. Interacts with ALG10B. Forms a stable complex with KCNE1 or KCNE2, and that this heteromultimerization regulates Inward rectifier potassium channel activity. Interacts with CANX. The core-glycosylated, but not the fully glycosylated form interacts with RNF207. Interacts with NDFIP1 and NDFIP2; this interaction decreases the cell membrane expression by targeting KCNH2, through interaction with NEDD4L, for the degradation through the multivesicular bodies (MVBs)-lysosomal pathway. Phosphorylated on serine and threonine residues. Phosphorylation by PKA inhibits ion conduction. Highly expressed in left and right atria of the heart, in cortex and hippocampus; detected at intermediate levels in left and right ventricle, Purkinje fibers, cerebellum, thalamus and basal ganglia; detected at low levels in liver, spleen and kidney.

The protein localises to the cell membrane. It carries out the reaction K(+)(in) = K(+)(out). Functionally, pore-forming (alpha) subunit of voltage-gated inwardly rectifying potassium channel. Characterized by unusual gating kinetics by producing relatively small outward currents during membrane depolarization and large inward currents during subsequent repolarization which reflect a rapid inactivation during depolarization and quick recovery from inactivation but slow deactivation (closing) during repolarization. Channel properties are modulated by cAMP and subunit assembly. Forms a stable complex with KCNE1 or KCNE2, and that this heteromultimerization regulates inward rectifier potassium channel activity. The chain is Voltage-gated inwardly rectifying potassium channel KCNH2 from Canis lupus familiaris (Dog).